Reading from the N-terminus, the 902-residue chain is Histone-lysine N-methyltransferase CLF (902 aa).

The segment covering 1–14 (MASEASPSSSATRS) has biased composition (low complexity). Disordered regions lie at residues 1 to 33 (MASE…KEVS), 73 to 107 (SMER…SNNN), and 335 to 522 (GKTG…FMGE). Basic and acidic residues-rich tracts occupy residues 15 to 33 (EPPK…KEVS) and 78 to 95 (GSCK…RDSP). Positions 337–357 (TGTSSDGAGTKTTPTKFSSKL) are enriched in polar residues. A compositionally biased stretch (low complexity) spans 394-403 (DKVSSSPKVK). A compositionally biased stretch (basic residues) spans 404–416 (GSGRRVGRKRNKN). A compositionally biased stretch (low complexity) spans 438–449 (SDSIASGSCSPS). Over residues 459 to 473 (ATSSSQKHVKSGNSG) the composition is skewed to polar residues. One can recognise an SANT domain in the interval 531–581 (TNKLWRPLEKSLFDKGVEIFGMNSCLIARNLLSGFKSCWEVFQYMTCSENK). The region spanning 638-737 (RKRITEKKDQ…SLGVPSQRGD (100 aa)) is the CXC domain. The SET domain maps to 752–867 (QRVLLGISDV…AGEELFYDYR (116 aa)). Tyr-866 serves as a coordination point for S-adenosyl-L-methionine. Over residues 875–890 (AWAKKPEAPGSKKDEN) the composition is skewed to basic and acidic residues. The interval 875–902 (AWAKKPEAPGSKKDENVTPSVGRPKKLA) is disordered.

This sequence belongs to the class V-like SAM-binding methyltransferase superfamily. Histone-lysine methyltransferase family. EZ subfamily. As to quaternary structure, probable component of a PcG complex. In plants, PcG complexes are probably composed of a member of the EZ family (CLF or MEA), FIE, and a member of the VEFS family (FIS2, VRN2 or EMF2). Interacts with FIE. Interacts with RING1A. Binds to ALP1. Interacts with BLI. Binds to ATX1 in the nucleus. Interacts with EOL1. Interacts (via SANT domain) with HXK1 in the nucleus. Strongly expressed throughout the apical meristem, leaf primordia, and leaves of 7-8 day-old seedling. Weakly expressed in the vasculature of hypocotyl. Strongly expressed throughout the young stages 1 and 2 floral meristems that arose on the flanks of the apex. In stage 3 and 4 flowers, it is expressed in the emerging sepal primordia and in the dome of the floral meristem. During stages 6 and 7, it is strongly expressed in developing petal and stamen, and weakly expressed in the sepals. Late in floral development, at stage 12, it is weakly expressed in all floral whorls, and expressed at intermediate level in petals and ovules.

It localises to the nucleus. It catalyses the reaction L-lysyl-[histone] + S-adenosyl-L-methionine = N(6)-methyl-L-lysyl-[histone] + S-adenosyl-L-homocysteine + H(+). In terms of biological role, polycomb group (PcG) protein. Catalytic subunit of some PcG multiprotein complex, which methylates 'Lys-27' of histone H3, leading to transcriptional repression of the affected target genes, mainly abscisic acid (ABA) responsive elements. Required to regulate floral development by repressing the AGAMOUS homeotic gene in leaves, inflorescence stems and flowers. Together with ATX1, modulates AG nucleosome methylation statement. Regulates the antero-posterior organization of the endosperm, as well as the division and elongation rates of leaf cells. PcG proteins act by forming multiprotein complexes, which are required to maintain the transcriptionally repressive state of homeotic genes throughout development. PcG proteins are not required to initiate repression, but to maintain it during later stages of development. Forms a nuclear complex with EZA1/SWN and HXK1 to target common glucose-responsive genes and regulate glucose signaling by glucose-mediated gene repression. Affects the recruitment of HXK1 to the target chromatin. This is Histone-lysine N-methyltransferase CLF from Arabidopsis thaliana (Mouse-ear cress).